The primary structure comprises 143 residues: Transcriptional regulator MraZ (143 aa).

SpoVT-AbrB domains are found at residues 5–47 (EYKH…SLKE) and 76–119 (ACEC…SENN).

It belongs to the MraZ family. In terms of assembly, forms oligomers.

It is found in the cytoplasm. It localises to the nucleoid. This is Transcriptional regulator MraZ from Caldicellulosiruptor bescii (strain ATCC BAA-1888 / DSM 6725 / KCTC 15123 / Z-1320) (Anaerocellum thermophilum).